The primary structure comprises 200 residues: Glycerol-3-phosphate acyltransferase (200 aa).

5 helical membrane passes run 3–23 (YIYS…FFIA), 50–70 (FYGA…VFLV), 75–95 (IKFM…SIFL), 109–129 (VFLA…LFIV), and 134–154 (YVSL…FFAG).

Belongs to the PlsY family. As to quaternary structure, probably interacts with PlsX.

The protein resides in the cell inner membrane. It carries out the reaction an acyl phosphate + sn-glycerol 3-phosphate = a 1-acyl-sn-glycero-3-phosphate + phosphate. The protein operates within lipid metabolism; phospholipid metabolism. Its function is as follows. Catalyzes the transfer of an acyl group from acyl-phosphate (acyl-PO(4)) to glycerol-3-phosphate (G3P) to form lysophosphatidic acid (LPA). This enzyme utilizes acyl-phosphate as fatty acyl donor, but not acyl-CoA or acyl-ACP. This Thermosipho melanesiensis (strain DSM 12029 / CIP 104789 / BI429) protein is Glycerol-3-phosphate acyltransferase.